A 348-amino-acid chain; its full sequence is Phosphoribosylformylglycinamidine cyclo-ligase (348 aa).

Belongs to the AIR synthase family.

The protein localises to the cytoplasm. It catalyses the reaction 2-formamido-N(1)-(5-O-phospho-beta-D-ribosyl)acetamidine + ATP = 5-amino-1-(5-phospho-beta-D-ribosyl)imidazole + ADP + phosphate + H(+). It functions in the pathway purine metabolism; IMP biosynthesis via de novo pathway; 5-amino-1-(5-phospho-D-ribosyl)imidazole from N(2)-formyl-N(1)-(5-phospho-D-ribosyl)glycinamide: step 2/2. This is Phosphoribosylformylglycinamidine cyclo-ligase from Geotalea daltonii (strain DSM 22248 / JCM 15807 / FRC-32) (Geobacter daltonii).